The sequence spans 108 residues: UPF0060 membrane protein YnfA (108 aa).

Residues 1 to 5 are Periplasmic-facing; it reads MFKTT. Residues 6-26 form a helical membrane-spanning segment; that stretch reads LLFFITALCEIIGCFLPWLWL. Residues 27 to 30 lie on the Cytoplasmic side of the membrane; the sequence is KRNG. A helical membrane pass occupies residues 31-51; it reads SIWLLLPAGVSLAFFVWLLTL. Topologically, residues 52–60 are periplasmic; sequence HPAASGRVY. The helical transmembrane segment at 61–81 threads the bilayer; it reads AAYGGVYVCTALLWLRFIDGV. At 82–84 the chain is on the cytoplasmic side; it reads KLS. A helical membrane pass occupies residues 85 to 105; that stretch reads LYDWSGALIALCGMLIIVAGW. Residues 106–108 lie on the Periplasmic side of the membrane; that stretch reads GRA.

The protein belongs to the UPF0060 family.

Its subcellular location is the cell inner membrane. In Escherichia fergusonii (strain ATCC 35469 / DSM 13698 / CCUG 18766 / IAM 14443 / JCM 21226 / LMG 7866 / NBRC 102419 / NCTC 12128 / CDC 0568-73), this protein is UPF0060 membrane protein YnfA.